Reading from the N-terminus, the 229-residue chain is Peroxiredoxin-like 2A (229 aa).

Residues 14–112 (MWSIGAGALG…DQLGVPLYAV (99 aa)) are thioredoxin fold. Active-site redox-active residues include Cys-85 and Cys-88.

This sequence belongs to the peroxiredoxin-like PRXL2 family. PRXL2A subfamily. In terms of tissue distribution, expressed in CSF1 and TNFSF11-stimulated CD14(+) peripheral blood mononuclear cells (PBMCs).

The protein localises to the cytoplasm. Its subcellular location is the secreted. In terms of biological role, involved in redox regulation of the cell. Acts as an antioxidant. Inhibits TNFSF11-induced NFKB1 and JUN activation and osteoclast differentiation. May affect bone resorption and help to maintain bone mass. Acts as a negative regulator of macrophage-mediated inflammation by inhibiting macrophage production of inflammatory cytokines, probably through suppression of the MAPK signaling pathway. The chain is Peroxiredoxin-like 2A from Homo sapiens (Human).